A 311-amino-acid chain; its full sequence is L-lactate dehydrogenase (311 aa).

NAD(+) is bound by residues V12, D33, K38, Y63, and 77–78 (GA). Residues Q80, R86, and 118-121 (NPVD) each bind substrate. NAD(+) is bound by residues 116-118 (VTN) and S141. Substrate is bound at residue 146–149 (DSAR). Beta-D-fructose 1,6-bisphosphate is bound by residues R151 and H166. Residue H173 is the Proton acceptor of the active site. Y219 carries the phosphotyrosine modification. T228 is a binding site for substrate.

This sequence belongs to the LDH/MDH superfamily. LDH family. In terms of assembly, homotetramer.

The protein localises to the cytoplasm. The enzyme catalyses (S)-lactate + NAD(+) = pyruvate + NADH + H(+). It participates in fermentation; pyruvate fermentation to lactate; (S)-lactate from pyruvate: step 1/1. Allosterically activated by fructose 1,6-bisphosphate (FBP). Its function is as follows. Catalyzes the conversion of lactate to pyruvate. The sequence is that of L-lactate dehydrogenase from Thermoanaerobacter pseudethanolicus (strain ATCC 33223 / 39E) (Clostridium thermohydrosulfuricum).